The primary structure comprises 285 residues: Bifunctional protein FolD (285 aa).

NADP(+) contacts are provided by residues 165 to 167 and S190; that span reads GRS.

This sequence belongs to the tetrahydrofolate dehydrogenase/cyclohydrolase family. Homodimer.

The enzyme catalyses (6R)-5,10-methylene-5,6,7,8-tetrahydrofolate + NADP(+) = (6R)-5,10-methenyltetrahydrofolate + NADPH. It catalyses the reaction (6R)-5,10-methenyltetrahydrofolate + H2O = (6R)-10-formyltetrahydrofolate + H(+). It participates in one-carbon metabolism; tetrahydrofolate interconversion. Functionally, catalyzes the oxidation of 5,10-methylenetetrahydrofolate to 5,10-methenyltetrahydrofolate and then the hydrolysis of 5,10-methenyltetrahydrofolate to 10-formyltetrahydrofolate. In Burkholderia cenocepacia (strain HI2424), this protein is Bifunctional protein FolD.